Consider the following 452-residue polypeptide: COBRA-like protein 1 (452 aa).

The first 33 residues, 1–33 (MGFFLCSSSSIFFKFGISIIFLVSFSGLTPSEA), serve as a signal peptide directing secretion. Residues Asn-42, Asn-167, Asn-175, Asn-214, Asn-239, Asn-254, Asn-323, Asn-338, and Asn-357 are each glycosylated (N-linked (GlcNAc...) asparagine). Ser-432 carries the GPI-anchor amidated serine lipid modification. Positions 433–452 (VGSLFAAMALLLIVFLHGNL) are cleaved as a propeptide — removed in mature form.

It belongs to the COBRA family. Expressed in roots, stems, leaves, flowers and siliques.

The protein localises to the cell membrane. The sequence is that of COBRA-like protein 1 (COBL1) from Arabidopsis thaliana (Mouse-ear cress).